We begin with the raw amino-acid sequence, 253 residues long: Indole-3-glycerol phosphate synthase (253 aa).

It belongs to the TrpC family.

It catalyses the reaction 1-(2-carboxyphenylamino)-1-deoxy-D-ribulose 5-phosphate + H(+) = (1S,2R)-1-C-(indol-3-yl)glycerol 3-phosphate + CO2 + H2O. Its pathway is amino-acid biosynthesis; L-tryptophan biosynthesis; L-tryptophan from chorismate: step 4/5. The polypeptide is Indole-3-glycerol phosphate synthase (Bacillus cereus (strain ATCC 10987 / NRS 248)).